A 552-amino-acid polypeptide reads, in one-letter code: uncharacterized protein (552 aa).

The segment at 1 to 59 (MPLEKTNTHDSTATVEDQEATDNPMHLTQSRMLDLAGNPNRTTSRQSETLFPNGVDLNY) is disordered. A compositionally biased stretch (polar residues) spans 39 to 50 (PNRTTSRQSETL). Helical transmembrane passes span 116 to 136 (ITIV…VIAG), 158 to 178 (LMVV…EMIG), 181 to 201 (IVYL…ALAP), 203 to 223 (IACL…PLTL), 238 to 258 (GLAI…GPLV), 271 to 291 (WIFW…LPVP), 345 to 365 (ILVC…GYFF), 383 to 403 (GLMF…TPFL), 424 to 444 (LVGM…FAWT), 450 to 470 (IWIG…LFYF), 484 to 506 (CASA…PLFI), and 519 to 539 (FFLL…FYLF).

Belongs to the major facilitator superfamily.

It localises to the membrane. This is an uncharacterized protein from Schizosaccharomyces pombe (strain 972 / ATCC 24843) (Fission yeast).